Consider the following 474-residue polypeptide: Cysteine--tRNA ligase (474 aa).

Position 30 (Cys-30) interacts with Zn(2+). The short motif at 32–42 (PTVYNYAHIGN) is the 'HIGH' region element. Zn(2+) is bound by residues Cys-215, His-240, and Glu-244. Positions 272–276 (KMSKS) match the 'KMSKS' region motif. Lys-275 provides a ligand contact to ATP.

This sequence belongs to the class-I aminoacyl-tRNA synthetase family. As to quaternary structure, monomer. Zn(2+) is required as a cofactor.

It localises to the cytoplasm. The enzyme catalyses tRNA(Cys) + L-cysteine + ATP = L-cysteinyl-tRNA(Cys) + AMP + diphosphate. The sequence is that of Cysteine--tRNA ligase from Brachyspira hyodysenteriae (strain ATCC 49526 / WA1).